Consider the following 491-residue polypeptide: Aspartyl/glutamyl-tRNA(Asn/Gln) amidotransferase subunit B (491 aa).

This sequence belongs to the GatB/GatE family. GatB subfamily. Heterotrimer of A, B and C subunits.

The enzyme catalyses L-glutamyl-tRNA(Gln) + L-glutamine + ATP + H2O = L-glutaminyl-tRNA(Gln) + L-glutamate + ADP + phosphate + H(+). It carries out the reaction L-aspartyl-tRNA(Asn) + L-glutamine + ATP + H2O = L-asparaginyl-tRNA(Asn) + L-glutamate + ADP + phosphate + 2 H(+). Its function is as follows. Allows the formation of correctly charged Asn-tRNA(Asn) or Gln-tRNA(Gln) through the transamidation of misacylated Asp-tRNA(Asn) or Glu-tRNA(Gln) in organisms which lack either or both of asparaginyl-tRNA or glutaminyl-tRNA synthetases. The reaction takes place in the presence of glutamine and ATP through an activated phospho-Asp-tRNA(Asn) or phospho-Glu-tRNA(Gln). This chain is Aspartyl/glutamyl-tRNA(Asn/Gln) amidotransferase subunit B, found in Trichormus variabilis (strain ATCC 29413 / PCC 7937) (Anabaena variabilis).